The chain runs to 353 residues: Photosystem II D2 protein (353 aa).

Residue threonine 2 is modified to N-acetylthreonine. At threonine 2 the chain carries Phosphothreonine. Residues 41–61 form a helical membrane-spanning segment; it reads CAYFAVGGWFTGTTFVTSWYT. Histidine 118 serves as a coordination point for chlorophyll a. Residues 125–141 form a helical membrane-spanning segment; the sequence is GFMLRQFELARSVQLRP. Pheophytin a contacts are provided by glutamine 130 and asparagine 143. Residues 153-166 form a helical membrane-spanning segment; sequence VFVSVFLIYPLGQS. Histidine 198 is a binding site for chlorophyll a. The helical transmembrane segment at 208–228 threads the bilayer; it reads AALLCAIHGATVENTLFEDGD. Histidine 215 and phenylalanine 262 together coordinate a plastoquinone. Residue histidine 215 participates in Fe cation binding. Histidine 269 is a binding site for Fe cation. A helical transmembrane segment spans residues 279-295; the sequence is GLWMSALGVVGLALNLR.

This sequence belongs to the reaction center PufL/M/PsbA/D family. In terms of assembly, PSII is composed of 1 copy each of membrane proteins PsbA, PsbB, PsbC, PsbD, PsbE, PsbF, PsbH, PsbI, PsbJ, PsbK, PsbL, PsbM, PsbT, PsbX, PsbY, PsbZ, Psb30/Ycf12, at least 3 peripheral proteins of the oxygen-evolving complex and a large number of cofactors. It forms dimeric complexes. The D1/D2 heterodimer binds P680, chlorophylls that are the primary electron donor of PSII, and subsequent electron acceptors. It shares a non-heme iron and each subunit binds pheophytin, quinone, additional chlorophylls, carotenoids and lipids. There is also a Cl(-1) ion associated with D1 and D2, which is required for oxygen evolution. The PSII complex binds additional chlorophylls, carotenoids and specific lipids. serves as cofactor.

The protein resides in the plastid. Its subcellular location is the chloroplast thylakoid membrane. It catalyses the reaction 2 a plastoquinone + 4 hnu + 2 H2O = 2 a plastoquinol + O2. In terms of biological role, photosystem II (PSII) is a light-driven water:plastoquinone oxidoreductase that uses light energy to abstract electrons from H(2)O, generating O(2) and a proton gradient subsequently used for ATP formation. It consists of a core antenna complex that captures photons, and an electron transfer chain that converts photonic excitation into a charge separation. The D1/D2 (PsbA/PsbD) reaction center heterodimer binds P680, the primary electron donor of PSII as well as several subsequent electron acceptors. D2 is needed for assembly of a stable PSII complex. This chain is Photosystem II D2 protein, found in Nicotiana tabacum (Common tobacco).